Here is a 298-residue protein sequence, read N- to C-terminus: Tryptophan 2,3-dioxygenase (298 aa).

Substrate contacts are provided by residues 51 to 55 (FIIQH), Tyr113, and Arg117. A heme-binding site is contributed by His240. Thr254 is a substrate binding site.

Belongs to the tryptophan 2,3-dioxygenase family. As to quaternary structure, homotetramer. Heme is required as a cofactor.

The enzyme catalyses L-tryptophan + O2 = N-formyl-L-kynurenine. It participates in amino-acid degradation; L-tryptophan degradation via kynurenine pathway; L-kynurenine from L-tryptophan: step 1/2. In terms of biological role, heme-dependent dioxygenase that catalyzes the oxidative cleavage of the L-tryptophan (L-Trp) pyrrole ring and converts L-tryptophan to N-formyl-L-kynurenine. Catalyzes the oxidative cleavage of the indole moiety. In Xanthomonas campestris pv. campestris (strain 8004), this protein is Tryptophan 2,3-dioxygenase.